Reading from the N-terminus, the 159-residue chain is Calcium-binding protein CML39 (159 aa).

EF-hand domains are found at residues 18-53, 54-89, 93-128, and 129-159; these read EKNR…LGEQ, MSDE…NDEF, EKKR…LGES, and RTTD…LMMR. Ca(2+)-binding residues include Asp31, Asn33, Asp35, Arg37, Glu42, Asp67, Asp69, Asp71, Met73, and Glu78. Positions 142, 144, 146, and 153 each coordinate Ca(2+).

Expressed in the zones of elongation and differentiation in seedling roots and at the root-hypocotyl junction. Expressed from stage 12 of flower development in anthers, specifically in pollen.

Functionally, potential calcium sensor that binds calcium in vitro. The chain is Calcium-binding protein CML39 (CML39) from Arabidopsis thaliana (Mouse-ear cress).